We begin with the raw amino-acid sequence, 197 residues long: Probable GTP-binding protein EngB (197 aa).

The EngB-type G domain maps to Ser25–Arg197. Residues Gly33–Ser40, Gly60–Gln64, Asp79–Gly82, Thr146–Asp149, and Met177–Ile179 contribute to the GTP site. Mg(2+) contacts are provided by Ser40 and Thr62.

It belongs to the TRAFAC class TrmE-Era-EngA-EngB-Septin-like GTPase superfamily. EngB GTPase family. The cofactor is Mg(2+).

Functionally, necessary for normal cell division and for the maintenance of normal septation. In Wolbachia pipientis wMel, this protein is Probable GTP-binding protein EngB.